The sequence spans 170 residues: Copper transporter 1 (170 aa).

Residues 1 to 29 (MDHDHMHGMPRPSSSSSSSPSSMMNNGSM) form a disordered region. Low complexity predominate over residues 9–29 (MPRPSSSSSSSPSSMMNNGSM). Helical transmembrane passes span 65-85 (GMYALCLIFVFFLAVLTEWLA) and 114-134 (IGLAYLVMLAVMSFNAGVFLV).

This sequence belongs to the copper transporter (Ctr) (TC 1.A.56) family. SLC31A subfamily. In terms of tissue distribution, expressed in the root apex, lateral root primordia, embryo, trichomes, guard cells and pollen grains.

It localises to the membrane. Its function is as follows. Copper transporter involved in copper acquisition and transport in leaves. Required for copper homeostasis and normal plant growth and development. In Arabidopsis thaliana (Mouse-ear cress), this protein is Copper transporter 1 (COPT1).